The primary structure comprises 794 residues: Zinc finger protein 148 (794 aa).

K6 participates in a covalent cross-link: Glycyl lysine isopeptide (Lys-Gly) (interchain with G-Cter in SUMO2). S51 bears the Phosphoserine mark. Residues K88, K115, and K132 each participate in a glycyl lysine isopeptide (Lys-Gly) (interchain with G-Cter in SUMO2) cross-link. The segment at 171–193 (HVCEHCNAAFRTNYHLQRHVFIH) adopts a C2H2-type 1 zinc-finger fold. T194 bears the Phosphothreonine mark. 2 consecutive C2H2-type zinc fingers follow at residues 199 to 221 (FQCSQCDMRFIQKYLLQRHEKIH) and 227 to 249 (FRCDECGMRFIQKYHMERHKRTH). Phosphoserine is present on S250. The C2H2-type 4 zinc-finger motif lies at 255-278 (YQCEYCLQYFSRTDRVLKHKRMCH). A Glycyl lysine isopeptide (Lys-Gly) (interchain with G-Cter in SUMO2) cross-link involves residue K291. Residues 298 to 346 (EEDSGFSTSPKDNSLPKKKRQKPEKKSSGMDKESVLDKSDTKKDRNDYL) form a disordered region. Phosphoserine occurs at positions 301 and 306. K308 participates in a covalent cross-link: Glycyl lysine isopeptide (Lys-Gly) (interchain with G-Cter in SUMO2). Basic and acidic residues predominate over residues 321–344 (EKKSSGMDKESVLDKSDTKKDRND). K356 participates in a covalent cross-link: Glycyl lysine isopeptide (Lys-Gly) (interchain with G-Cter in SUMO1); alternate. A Glycyl lysine isopeptide (Lys-Gly) (interchain with G-Cter in SUMO2); alternate cross-link involves residue K356. K402 participates in a covalent cross-link: Glycyl lysine isopeptide (Lys-Gly) (interchain with G-Cter in SUMO2). A Phosphoserine modification is found at S412. Residues K421 and K424 each participate in a glycyl lysine isopeptide (Lys-Gly) (interchain with G-Cter in SUMO2) cross-link. A compositionally biased stretch (polar residues) spans 574 to 588 (NSSDVPEVTQSENVG). Residues 574–596 (NSSDVPEVTQSENVGSSSQASSS) are disordered. At K607 the chain carries N6-acetyllysine. A phosphoserine mark is found at S665 and S784.

The protein belongs to the krueppel C2H2-type zinc-finger protein family. As to quaternary structure, interacts with HNRNPDL. Interacts with the 5FMC complex; the interaction requires association with CHTOP. Interacts with CAVIN1. Post-translationally, sumoylated with SUMO2. Desumoylated by SENP3, resulting in the stimulation of transcription of its target genes. Expressed in heart, lung, kidney, skeletal muscle, liver, brain and spleen.

The protein localises to the nucleus. Functionally, involved in transcriptional regulation. Represses the transcription of a number of genes including gastrin, stromelysin and enolase. Binds to the G-rich box in the enhancer region of these genes. In Rattus norvegicus (Rat), this protein is Zinc finger protein 148 (Znf148).